The primary structure comprises 588 residues: Adenine deaminase (588 aa).

Belongs to the metallo-dependent hydrolases superfamily. Adenine deaminase family. In terms of assembly, homodimer. Mn(2+) is required as a cofactor.

It catalyses the reaction adenine + H2O + H(+) = hypoxanthine + NH4(+). The protein is Adenine deaminase of Escherichia coli O81 (strain ED1a).